Consider the following 143-residue polypeptide: 3-dehydroquinate dehydratase (143 aa).

The active-site Proton acceptor is the Y22. Residues N73, H79, and D86 each coordinate substrate. The active-site Proton donor is the H99. Substrate-binding positions include 100–101 (IS) and R110.

This sequence belongs to the type-II 3-dehydroquinase family. Homododecamer.

The enzyme catalyses 3-dehydroquinate = 3-dehydroshikimate + H2O. It functions in the pathway metabolic intermediate biosynthesis; chorismate biosynthesis; chorismate from D-erythrose 4-phosphate and phosphoenolpyruvate: step 3/7. Its function is as follows. Catalyzes a trans-dehydration via an enolate intermediate. The polypeptide is 3-dehydroquinate dehydratase (Mycobacterium avium (strain 104)).